The primary structure comprises 296 residues: MEQFRNIGIIGRLGSSQVLDTIRRLKKFLLERHLHVILEDTIAEVLPGHGLQTSTRKLLGEVCDLVIVVGGDGSLLGAARALARHNIPVLGINRGNLGFLTDIRPDELEEKVAEVLDGHYLVENRFLLQAEVRRHNEAIGQGDALNDVVLHPGKSTRMIEFEIYIDGQFVCSQKADGLIVATPTGSTAYALSAGGPIMHPKLDAIVIVPMYPHTLSGRPIVVDGNSELKIVVSKDLQIYPQVSCDGQNHFTCAPGDTITVSKKPQKLRLIHPLDHNYYEVCRTKLGWGSRLGGRDD.

D72 functions as the Proton acceptor in the catalytic mechanism. NAD(+) contacts are provided by residues 72 to 73, 146 to 147, R157, K174, D176, 187 to 192, and Q247; these read DG, ND, and TAYALS.

This sequence belongs to the NAD kinase family. A divalent metal cation serves as cofactor.

It is found in the cytoplasm. It catalyses the reaction NAD(+) + ATP = ADP + NADP(+) + H(+). In terms of biological role, involved in the regulation of the intracellular balance of NAD and NADP, and is a key enzyme in the biosynthesis of NADP. Catalyzes specifically the phosphorylation on 2'-hydroxyl of the adenosine moiety of NAD to yield NADP. This is NAD kinase from Pseudomonas entomophila (strain L48).